Reading from the N-terminus, the 596-residue chain is Probable protein phosphatase 2C 26 (596 aa).

The segment at 122 to 154 (SGPLDPAVPFSGPLPAKPPKPASSSSRGFSRRF) is disordered. One can recognise a PPM-type phosphatase domain in the interval 177-584 (LRRDDGVQWA…DDVTVMVISL (408 aa)). Mn(2+)-binding residues include D212, G213, D512, and D575.

Belongs to the PP2C family. It depends on Mg(2+) as a cofactor. Mn(2+) is required as a cofactor.

It carries out the reaction O-phospho-L-seryl-[protein] + H2O = L-seryl-[protein] + phosphate. The catalysed reaction is O-phospho-L-threonyl-[protein] + H2O = L-threonyl-[protein] + phosphate. The chain is Probable protein phosphatase 2C 26 from Oryza sativa subsp. japonica (Rice).